The following is a 616-amino-acid chain: DEAD-box ATP-dependent RNA helicase 53, mitochondrial (616 aa).

The N-terminal 81 residues, 1 to 81 (MITTVLRRSL…DFRASMVSQA (81 aa)), are a transit peptide targeting the mitochondrion. Residues 104 to 132 (LAISELGISPEIVKALSSKGIEKLFPIQK) carry the Q motif motif. Residues 135–309 (LEPAMEGRDM…KKYLNNPLTV (175 aa)) form the Helicase ATP-binding domain. 148–155 (ARTGTGKT) provides a ligand contact to ATP. The DEAD box motif lies at 257 to 260 (DEAD). Residues 338 to 482 (IIGPLVTEHA…ELPSIAVERG (145 aa)) enclose the Helicase C-terminal domain. The disordered stretch occupies residues 489-616 (GIGSRSGGSF…FGSNDGKRSY (128 aa)). 2 stretches are compositionally biased toward gly residues: residues 492-501 (SRSGGSFGGG) and 508-531 (SFGG…GRSG). 2 stretches are compositionally biased toward low complexity: residues 532–568 (GSSN…SGGR) and 578–587 (GSSNNRSSGF).

Belongs to the DEAD box helicase family. DDX21/DDX50 subfamily.

It is found in the mitochondrion. The enzyme catalyses ATP + H2O = ADP + phosphate + H(+). The polypeptide is DEAD-box ATP-dependent RNA helicase 53, mitochondrial (RH53) (Arabidopsis thaliana (Mouse-ear cress)).